The primary structure comprises 335 residues: tRNA N6-adenosine threonylcarbamoyltransferase (335 aa).

His-109, His-113, and Tyr-130 together coordinate a divalent metal cation. Residues 130 to 134 (YVSGG), Asp-162, Gly-177, Glu-181, and Asn-266 contribute to the substrate site. Asp-294 is a binding site for a divalent metal cation.

It belongs to the KAE1 / TsaD family. As to quaternary structure, component of the EKC/KEOPS complex composed of at least GON7, TP53RK, TPRKB, OSGEP and LAGE3; the whole complex dimerizes. The cofactor is a divalent metal cation. In terms of tissue distribution, widely expressed at low level. Expressed at intermediate level in lung. Weakly expressed in testis, skeletal muscle, kidney, liver, spleen, brain and heart.

It localises to the cytoplasm. It is found in the nucleus. It carries out the reaction L-threonylcarbamoyladenylate + adenosine(37) in tRNA = N(6)-L-threonylcarbamoyladenosine(37) in tRNA + AMP + H(+). Functionally, component of the EKC/KEOPS complex that is required for the formation of a threonylcarbamoyl group on adenosine at position 37 (t(6)A37) in tRNAs that read codons beginning with adenine. The complex is probably involved in the transfer of the threonylcarbamoyl moiety of threonylcarbamoyl-AMP (TC-AMP) to the N6 group of A37. OSGEP likely plays a direct catalytic role in this reaction, but requires other protein(s) of the complex to fulfill this activity. The protein is tRNA N6-adenosine threonylcarbamoyltransferase (Osgep) of Mus musculus (Mouse).